The following is a 287-amino-acid chain: Acetylglutamate kinase (287 aa).

Residues G65–G66, R87, and N181 contribute to the substrate site.

The protein belongs to the acetylglutamate kinase family. ArgB subfamily.

It is found in the cytoplasm. It catalyses the reaction N-acetyl-L-glutamate + ATP = N-acetyl-L-glutamyl 5-phosphate + ADP. It participates in amino-acid biosynthesis; L-arginine biosynthesis; N(2)-acetyl-L-ornithine from L-glutamate: step 2/4. Catalyzes the ATP-dependent phosphorylation of N-acetyl-L-glutamate. The sequence is that of Acetylglutamate kinase from Syntrophomonas wolfei subsp. wolfei (strain DSM 2245B / Goettingen).